The sequence spans 369 residues: Outer membrane protein P2 (369 aa).

Positions 1-20 are cleaved as a signal peptide; the sequence is MKKTLAALIVGAFAASAANA.

Belongs to the Gram-negative porin family. Homotrimer.

The protein localises to the cell outer membrane. Functionally, forms pores that allow passive diffusion of small molecules across the outer membrane. This Haemophilus influenzae protein is Outer membrane protein P2 (ompP2).